A 327-amino-acid polypeptide reads, in one-letter code: D-alanine--D-alanine ligase (327 aa).

An ATP-grasp domain is found at 113 to 312 (KRLWMTHGLA…YEDFVMQVLA (200 aa)). Residue 139–194 (VADLGLPLIVKPAREGSSIGLTKVIAADQMRAAFEKAAGLDADVIAETFIDGAELT) coordinates ATP. Mg(2+) contacts are provided by aspartate 266, glutamate 279, and asparagine 281.

This sequence belongs to the D-alanine--D-alanine ligase family. Mg(2+) is required as a cofactor. The cofactor is Mn(2+).

The protein resides in the cytoplasm. The enzyme catalyses 2 D-alanine + ATP = D-alanyl-D-alanine + ADP + phosphate + H(+). Its pathway is cell wall biogenesis; peptidoglycan biosynthesis. Cell wall formation. The polypeptide is D-alanine--D-alanine ligase (Cupriavidus metallidurans (strain ATCC 43123 / DSM 2839 / NBRC 102507 / CH34) (Ralstonia metallidurans)).